Here is a 188-residue protein sequence, read N- to C-terminus: Ribosome-recycling factor (188 aa).

It belongs to the RRF family.

It localises to the cytoplasm. In terms of biological role, responsible for the release of ribosomes from messenger RNA at the termination of protein biosynthesis. May increase the efficiency of translation by recycling ribosomes from one round of translation to another. This is Ribosome-recycling factor from Granulibacter bethesdensis (strain ATCC BAA-1260 / CGDNIH1).